Consider the following 167-residue polypeptide: Transmembrane protein B169L (167 aa).

Transmembrane regions (helical) follow at residues 28 to 48 (NPFI…FAIC) and 60 to 80 (TAIY…YVLN). Asn-88 carries N-linked (GlcNAc...) asparagine; by host glycosylation.

It belongs to the asfivirus B169L family.

Its subcellular location is the host membrane. It localises to the virion. The protein is Transmembrane protein B169L of African swine fever virus (isolate Tick/Malawi/Lil 20-1/1983) (ASFV).